Here is a 338-residue protein sequence, read N- to C-terminus: Terpene synthase 1 (338 aa).

Positions 80 to 85 (DDALDS) match the DDxx(x)D/E motif motif. Residues 220 to 228 (NDLVSYEKE) carry the NDxxSxxxD/E motif motif.

Belongs to the terpene synthase family.

It catalyses the reaction (2E,6E)-farnesyl diphosphate = (2S,3R,6S,9S)-(-)-protoillud-7-ene + diphosphate. Functionally, terpene synthase that converts its substrate farnesyl diphosphate (FPP) into the sesquiterpene protoillud-7-ene. The chain is Terpene synthase 1 from Cavenderia fasciculata (Slime mold).